The chain runs to 146 residues: Ninjurin-1 (146 aa).

The tract at residues 1–33 is disordered; it reads MASEAMELNGGVNRRDDPGARPQQGRMSRNTPL. The Extracellular segment spans residues 1–75; that stretch reads MASEAMELNG…ELGPSFSFYI (75 aa). The interval 37–66 is required to induce plasma membrane rupture; the sequence is HYANKKSAAESMLDIALLMANASQLKTVLE. Residues 41–52 form a helix alpha1 region; sequence KKSAAESMLDIA. The tract at residues 55–71 is helix alpha2; the sequence is MANASQLKTVLELGPSF. Asparagine 57 carries an N-linked (GlcNAc...) asparagine glycan. Residues 76–100 form a helical membrane-spanning segment; sequence PLITLISISLTLQIIVGILLIFIVK. Residues 101–110 lie on the Cytoplasmic side of the membrane; sequence WNLNDSSKHY. Residues 111–135 form a helical membrane-spanning segment; that stretch reads ILNLLENIVTALVFIVVVVNVFITA. Residues 136-146 lie on the Extracellular side of the membrane; sequence FGVQRPDDKTS.

The protein belongs to the ninjurin family. As to quaternary structure, homooligomer; in response to death stimuli, homooligomerizes into long, highly branched filaments and large, ring-shaped structures in the membrane. In terms of assembly, homodimer; in absence of death stimuli, forms an inactive homodimer. Homooligomer; in response to death stimuli, homooligomerizes into long, highly branched filaments and large, ring-shaped structures in the membrane.

The protein resides in the cell membrane. Its subcellular location is the synaptic cell membrane. With respect to regulation, in normal conditions, NINJ1 is inactivated. In response to death stimuli, homooligomerizes and disrupts membrane integrity by introducing the hydrophilic faces of alpha1 and alpha2 helices into the hydrophobic membrane. Homooligomerization and ability to mediate plasma membrane rupture is inhibited by glycine; it is unclear whether glycine directly or indirectly inhibits homooligomerization. Its activity is regulated as follows. In response to death stimuli, homooligomerizes and disrupts membrane integrity by introducing the hydrophilic faces of alpha1 and alpha2 helices into the hydrophobic membrane. Homooligomerization and ability to mediate plasma membrane rupture is inhibited by glycine; it is unclear whether glycine directly or indirectly inhibits homooligomerization. In normal conditions, NINJ1 is autoinhibited via formation of a homodimer: in the inactive homodimer, the alpha1 and alpha2 helices (residues 41-71) form a single transmembrane region without a kink, in which hydrophilic faces of alpha1 and alpha2 helices are sequestered. Functionally, effector of various programmed cell death, such as pyroptosis and necroptosis, which mediates plasma membrane rupture (cytolysis). Oligomerizes in response to death stimuli and forms ring-like structures on the plasma membrane: acts by cutting and shedding membrane disks, like a cookie cutter, leading to membrane damage and loss that cannot be repaired by the cell. Plasma membrane rupture leads to release intracellular molecules named damage-associated molecular patterns (DAMPs) that propagate the inflammatory response. Mechanistically, mediates plasma membrane rupture by introducing hydrophilic faces of 2 alpha helices into the hydrophobic membrane. Induces plasma membrane rupture downstream of Gasdermin (GSDMA, GSDMB, GSDMC, GSDMD, or GSDME) or MLKL during pyroptosis or necroptosis, respectively. Also acts as an effector of PANoptosis and ferroptosis. Induces plasma membrane rupture in response to cell swelling caused by osmotic stress. Acts as a regulator of Toll-like receptor 4 (TLR4) signaling triggered by lipopolysaccharide (LPS) during systemic inflammation; directly binds LPS. Involved in leukocyte migration during inflammation by promoting transendothelial migration of macrophages via homotypic binding. Promotes the migration of monocytes across the brain endothelium to central nervous system inflammatory lesions. Also acts as a homophilic transmembrane adhesion molecule involved in various processes such as axonal growth, cell chemotaxis and angiogenesis. Promotes cell adhesion by mediating homophilic interactions via its extracellular N-terminal adhesion motif (N-NAM). Also involved in striated muscle growth and differentiation. This chain is Ninjurin-1, found in Danio rerio (Zebrafish).